We begin with the raw amino-acid sequence, 400 residues long: Na(+)/H(+) antiporter NhaA (400 aa).

The next 12 membrane-spanning stretches (helical) occupy residues 26–46 (AGGI…NSPL), 71–91 (LIHW…GMEV), 107–127 (IFPA…YWFI), 137–157 (GWAI…ALLS), 166–186 (IFLL…IALF), 189–209 (HGLS…LILL), 212–232 (FKVS…ASVL), 233–253 (KSGV…PLKG), 273–293 (FVIL…GIDV), 299–319 (PLLL…IFGF), 340–360 (IFAV…LASL), and 373–393 (LSRL…YLFL).

Belongs to the NhaA Na(+)/H(+) (TC 2.A.33) antiporter family.

It is found in the cell inner membrane. The enzyme catalyses Na(+)(in) + 2 H(+)(out) = Na(+)(out) + 2 H(+)(in). Its function is as follows. Na(+)/H(+) antiporter that extrudes sodium in exchange for external protons. The polypeptide is Na(+)/H(+) antiporter NhaA (Haemophilus influenzae (strain PittEE)).